Consider the following 177-residue polypeptide: Large ribosomal subunit protein uL10 (177 aa).

This sequence belongs to the universal ribosomal protein uL10 family. As to quaternary structure, part of the ribosomal stalk of the 50S ribosomal subunit. The N-terminus interacts with L11 and the large rRNA to form the base of the stalk. The C-terminus forms an elongated spine to which L12 dimers bind in a sequential fashion forming a multimeric L10(L12)X complex.

Forms part of the ribosomal stalk, playing a central role in the interaction of the ribosome with GTP-bound translation factors. The sequence is that of Large ribosomal subunit protein uL10 from Leptospira borgpetersenii serovar Hardjo-bovis (strain JB197).